The chain runs to 610 residues: Protein Spindly-B (610 aa).

The stretch at 1-392 (MEESETVLKL…IDKVKDELSL (392 aa)) forms a coiled coil. Residues 474-610 (TEAHGVSDAT…KPATAQCPQQ (137 aa)) are disordered. 2 stretches are compositionally biased toward basic and acidic residues: residues 493-511 (SDDKKLPKEDLSLSTKDQD) and 535-548 (RIMEDEKDTPDLNK). A compositionally biased stretch (polar residues) spans 549–561 (RNPNNCTITSIHP). Residues 570–583 (SELKKVDEEQEKRK) are compositionally biased toward basic and acidic residues.

It belongs to the Spindly family.

The protein localises to the chromosome. The protein resides in the centromere. It is found in the kinetochore. Functionally, required for the localization of dynein and dynactin to the mitotic kintochore. Dynein is believed to control the initial lateral interaction between the kinetochore and spindle microtubules and to facilitate the subsequent formation of end-on kinetochore-microtubule attachments mediated by the NDC80 complex. This is Protein Spindly-B (spdl1-b) from Xenopus laevis (African clawed frog).